Reading from the N-terminus, the 141-residue chain is Large ribosomal subunit protein uL16c (141 aa).

This sequence belongs to the universal ribosomal protein uL16 family. In terms of assembly, part of the 50S ribosomal subunit.

Its subcellular location is the plastid. The protein localises to the chloroplast. The polypeptide is Large ribosomal subunit protein uL16c (Zygnema circumcarinatum (Green alga)).